The primary structure comprises 798 residues: Serine/threonine-protein kinase haspin (798 aa).

The segment at 1 to 110 is disordered; the sequence is MAASLPGPGS…WKLRARPSLT (110 aa). The residue at position 58 (Ser-58) is a Phosphoserine. Over residues 59-70 the composition is skewed to acidic residues; it reads QSDDPDDPDDPD. The residue at position 93 (Ser-93) is a Phosphoserine; by AURKB. The residue at position 97 (Thr-97) is a Phosphothreonine. Phosphoserine; by AURKB is present on Ser-143. Ser-147 is subject to Phosphoserine. The segment at 275 to 350 is disordered; sequence LVVGNGPEGP…KHQEATETSL (76 aa). The segment covering 300–315 has biased composition (basic and acidic residues); that stretch reads CQERGLQEAVRREHQE. The 315-residue stretch at 484–798 folds into the Protein kinase domain; it reads LQRCEKIGEG…DLLCQHSLFK (315 aa). ATP is bound by residues 490–498, Lys-511, 606–611, 649–654, and 687–689; these read IGEGVFGEV, EFGGID, DLHWGN, and DYT. The Proton acceptor role is filled by Asp-649.

It belongs to the protein kinase superfamily. Ser/Thr protein kinase family. Haspin subfamily. It depends on Mg(2+) as a cofactor. Autophosphorylated on both serine and threonine residues. Strongly phosphorylated during mitosis but this does not appear to significantly affect its intrinsic kinase activity. Phosphorylation by AURKB is required for full activity toward histone H3 at 'Ser-3' in mitosis. Strongly expressed in testis. Also present in thymus and bone marrow and low levels observed in prostate, intestine, lung, spleen and lymph node. Expressed in fetal skin, liver, kidney and small intestine and also in proliferating but not non-proliferating cell lines.

The protein localises to the nucleus. It is found in the chromosome. The protein resides in the cytoplasm. It localises to the cytoskeleton. Its subcellular location is the spindle. The enzyme catalyses L-seryl-[protein] + ATP = O-phospho-L-seryl-[protein] + ADP + H(+). It catalyses the reaction L-threonyl-[protein] + ATP = O-phospho-L-threonyl-[protein] + ADP + H(+). Constitutive activity that does not require phosphorylation. Specifically inhibited by 3-(1H-indazol-5-yl)-N-propylimidazo[1,2-b]pyridazin-6-amine (CHR-6494). In terms of biological role, serine/threonine-protein kinase that phosphorylates histone H3 at 'Thr-3' (H3T3ph) during mitosis. May act through H3T3ph to both position and modulate activation of AURKB and other components of the chromosomal passenger complex (CPC) at centromeres to ensure proper chromatid cohesion, metaphase alignment and normal progression through the cell cycle. This Homo sapiens (Human) protein is Serine/threonine-protein kinase haspin.